Reading from the N-terminus, the 124-residue chain is Small ribosomal subunit protein uS12 (124 aa).

Asp89 carries the 3-methylthioaspartic acid modification.

The protein belongs to the universal ribosomal protein uS12 family. In terms of assembly, part of the 30S ribosomal subunit. Contacts proteins S8 and S17. May interact with IF1 in the 30S initiation complex.

Functionally, with S4 and S5 plays an important role in translational accuracy. Its function is as follows. Interacts with and stabilizes bases of the 16S rRNA that are involved in tRNA selection in the A site and with the mRNA backbone. Located at the interface of the 30S and 50S subunits, it traverses the body of the 30S subunit contacting proteins on the other side and probably holding the rRNA structure together. The combined cluster of proteins S8, S12 and S17 appears to hold together the shoulder and platform of the 30S subunit. This chain is Small ribosomal subunit protein uS12, found in Glaesserella parasuis serovar 5 (strain SH0165) (Haemophilus parasuis).